The chain runs to 479 residues: MKGGTMVENAQYLDASASAPGSTTPLETAWIRVREKLKSEVGEVEYRTWLRQIVLGPLEEDELTLYLPTRFLRDWVRSQYEERLQTLWRTEREDIKGVELQVKRGLPEVSMGDAEDGEDGSGEGHELATQAAAPESRSDLAVPLDPRFTFDTFIVGKPNEFAYACARRVAEKPSSPGFNPLFLYGGVGLGKTHLMHAIGTELTRTGKVSVAYMSAEKFMYRFIAAIRSQSTMEFKEQLRSVDVLMIDDLQFLIGKDNTQEEFFHTFNALVDAGRQIIVSADKSPSDLSGLEDRLRTRLGCGMVADIHATTFELRISILEAKAKASGTHVPSKVLEYLAHKITTNVRELEGALNRLIAHADLVGRPVTLDTTQDVLKDMLKAHDRRVTIEEIQRKVSEHWNIRLTDMSSARRARAVARPRQVAMYLAKQLTSRSLPEIGRKFGNRDHTTVMHAVNRVTELMDQDTSFAEDVELLRRMLEG.

The interval 1–94 (MKGGTMVENA…QTLWRTERED (94 aa)) is domain I, interacts with DnaA modulators. The tract at residues 94–142 (DIKGVELQVKRGLPEVSMGDAEDGEDGSGEGHELATQAAAPESRSDLAV) is domain II. The segment at 106-137 (LPEVSMGDAEDGEDGSGEGHELATQAAAPESR) is disordered. The segment at 143–359 (PLDPRFTFDT…GALNRLIAHA (217 aa)) is domain III, AAA+ region. Positions 188, 190, 191, and 192 each coordinate ATP. Residues 360 to 479 (DLVGRPVTLD…VELLRRMLEG (120 aa)) are domain IV, binds dsDNA.

Belongs to the DnaA family. Oligomerizes as a right-handed, spiral filament on DNA at oriC.

Its subcellular location is the cytoplasm. In terms of biological role, plays an essential role in the initiation and regulation of chromosomal replication. ATP-DnaA binds to the origin of replication (oriC) to initiate formation of the DNA replication initiation complex once per cell cycle. Binds the DnaA box (a 9 base pair repeat at the origin) and separates the double-stranded (ds)DNA. Forms a right-handed helical filament on oriC DNA; dsDNA binds to the exterior of the filament while single-stranded (ss)DNA is stabiized in the filament's interior. The ATP-DnaA-oriC complex binds and stabilizes one strand of the AT-rich DNA unwinding element (DUE), permitting loading of DNA polymerase. After initiation quickly degrades to an ADP-DnaA complex that is not apt for DNA replication. Binds acidic phospholipids. In Gluconobacter oxydans (strain 621H) (Gluconobacter suboxydans), this protein is Chromosomal replication initiator protein DnaA.